The following is a 302-amino-acid chain: DNA-binding transcriptional activator HetR (302 aa).

Residue Ser-153 is part of the active site.

The protein belongs to the peptidase S48 family. As to quaternary structure, homodimer; disulfide-linked.

Might be involved in temporal and/or spatial regulation of nitrogen fixation. Dimerization is required for DNA-binding. Has both a protease and a DNA-binding activity. The polypeptide is DNA-binding transcriptional activator HetR (Trichodesmium erythraeum (strain IMS101)).